The following is a 276-amino-acid chain: Small ribosomal subunit protein uS2 (276 aa).

Disordered stretches follow at residues 209-233 (AQEAAAAAQAAKETAEPTTEGAADV) and 252-276 (VDWSAEGAQDWAADGAAEQATSSWE). A compositionally biased stretch (low complexity) spans 211-231 (EAAAAAQAAKETAEPTTEGAA).

The protein belongs to the universal ribosomal protein uS2 family. As to quaternary structure, component of the small ribosomal subunit. Mature ribosomes consist of a small (40S) and a large (60S) subunit. The 40S subunit contains about 33 different proteins and 1 molecule of RNA (18S). The 60S subunit contains about 49 different proteins and 3 molecules of RNA (25S, 5.8S and 5S). Interacts with RPS21.

The protein resides in the cytoplasm. Required for the assembly and/or stability of the 40S ribosomal subunit. Required for the processing of the 20S rRNA-precursor to mature 18S rRNA in a late step of the maturation of 40S ribosomal subunits. The protein is Small ribosomal subunit protein uS2 of Mycosarcoma maydis (Corn smut fungus).